The chain runs to 255 residues: 3-deoxy-manno-octulosonate cytidylyltransferase (255 aa).

Belongs to the KdsB family.

It is found in the cytoplasm. It carries out the reaction 3-deoxy-alpha-D-manno-oct-2-ulosonate + CTP = CMP-3-deoxy-beta-D-manno-octulosonate + diphosphate. It participates in nucleotide-sugar biosynthesis; CMP-3-deoxy-D-manno-octulosonate biosynthesis; CMP-3-deoxy-D-manno-octulosonate from 3-deoxy-D-manno-octulosonate and CTP: step 1/1. The protein operates within bacterial outer membrane biogenesis; lipopolysaccharide biosynthesis. Activates KDO (a required 8-carbon sugar) for incorporation into bacterial lipopolysaccharide in Gram-negative bacteria. The chain is 3-deoxy-manno-octulosonate cytidylyltransferase from Saccharophagus degradans (strain 2-40 / ATCC 43961 / DSM 17024).